The sequence spans 695 residues: MAREFSLEKTRNIGIMAHIDAGKTTTTERILFYTGRIHKIGETHEGASQMDWMEQEQERGITITSAATTAQWKGYRVNIIDTPGHVDFTVEVERSLRVLDGAVAVLDAQSGVEPQTETVWRQATTYGVPRVVFVNKMDKIGADFLYSVGTLHERLAANAHPIQLPIGAEDTFEGIIDLIEMNALYYEDDLGNDPHIKEIPADLKDLADEYRGKLVEAVAELDEELMMKYLEGEEITKEELKAGIRKGTLNVEFYPVVCGTAFKNKGVQPMLDAVLDYLPAPTDVPAINGVLPDGEEAARHADDSEPFSSLAFKVMTDPYVGRLTFFRVYSGTLNSGSYVQNSTKGKRERVGRILQMHANHREEISIVYAGDIAAAVGLKDTTTGDTLCDEKEQIILESMEFPEPVIQVAIEPKSKADQDKMGQALAKLAEEDPTFRAETDQETGQTLISGMGELHLDILVDRMKREFRVEANVGDPQVSYRETFRKSAQVEGKFVRQSGGRGQYGHVWIEFGPNEEGKGFEFENAIVGGVVPREYIPAVQAGLEGALDNGVLAGYPLIDIKAKLYDGSYHDVDSNEMAFKVAASMALRNAAKKCDPVILEPMMAVEVVIPEEYLGDIMGNITSRRGRVDGMEARGNAQVVRAFVPLANMFGYATHLRSGTQGRGVYTMQFDHYEEVPKSIAEEIIKANGGNNKED.

In terms of domain architecture, tr-type G spans 8–282; sequence EKTRNIGIMA…AVLDYLPAPT (275 aa). GTP-binding positions include 17 to 24, 81 to 85, and 135 to 138; these read AHIDAGKT, DTPGH, and NKMD.

This sequence belongs to the TRAFAC class translation factor GTPase superfamily. Classic translation factor GTPase family. EF-G/EF-2 subfamily.

It localises to the cytoplasm. Catalyzes the GTP-dependent ribosomal translocation step during translation elongation. During this step, the ribosome changes from the pre-translocational (PRE) to the post-translocational (POST) state as the newly formed A-site-bound peptidyl-tRNA and P-site-bound deacylated tRNA move to the P and E sites, respectively. Catalyzes the coordinated movement of the two tRNA molecules, the mRNA and conformational changes in the ribosome. This is Elongation factor G from Listeria innocua serovar 6a (strain ATCC BAA-680 / CLIP 11262).